Consider the following 848-residue polypeptide: Adenylate cyclase (848 aa).

Residues Met1–Leu535 form a catalytic region. The segment at Lys541–Ser848 is regulatory. Residue His609 is modified to Phosphohistidine; by CRR.

This sequence belongs to the adenylyl cyclase class-1 family.

Its subcellular location is the cytoplasm. The catalysed reaction is ATP = 3',5'-cyclic AMP + diphosphate. In Escherichia coli O157:H7, this protein is Adenylate cyclase (cyaA).